The chain runs to 161 residues: Large ribosomal subunit protein uL16 (161 aa).

Residues 140-161 form a disordered region; it reads LNKGNYKPAKTPVTADDSESSS.

The protein belongs to the universal ribosomal protein uL16 family. In terms of assembly, part of the 50S ribosomal subunit.

Its function is as follows. Binds 23S rRNA and is also seen to make contacts with the A and possibly P site tRNAs. The protein is Large ribosomal subunit protein uL16 of Prochlorococcus marinus (strain NATL1A).